The primary structure comprises 386 residues: Succinate--CoA ligase [ADP-forming] subunit beta (386 aa).

The ATP-grasp domain maps to 9-244 (KEILRKYGVS…LDEEDPKEIE (236 aa)). ATP is bound by residues K46, 53 to 55 (GRG), E99, C102, and E107. 2 residues coordinate Mg(2+): N199 and D213. Substrate contacts are provided by residues N264 and 321–323 (GIM).

This sequence belongs to the succinate/malate CoA ligase beta subunit family. In terms of assembly, heterotetramer of two alpha and two beta subunits. It depends on Mg(2+) as a cofactor.

The catalysed reaction is succinate + ATP + CoA = succinyl-CoA + ADP + phosphate. It carries out the reaction GTP + succinate + CoA = succinyl-CoA + GDP + phosphate. The protein operates within carbohydrate metabolism; tricarboxylic acid cycle; succinate from succinyl-CoA (ligase route): step 1/1. Its function is as follows. Succinyl-CoA synthetase functions in the citric acid cycle (TCA), coupling the hydrolysis of succinyl-CoA to the synthesis of either ATP or GTP and thus represents the only step of substrate-level phosphorylation in the TCA. The beta subunit provides nucleotide specificity of the enzyme and binds the substrate succinate, while the binding sites for coenzyme A and phosphate are found in the alpha subunit. The chain is Succinate--CoA ligase [ADP-forming] subunit beta from Bacillus pumilus (strain SAFR-032).